The primary structure comprises 78 residues: Delta-conotoxin TxVIA (78 aa).

An N-terminal signal peptide occupies residues 1–22; it reads MKLTCMMIVAVLFLTAWTFATA. A propeptide spanning residues 23 to 49 is cleaved from the precursor; sequence DDPRNGLGNLFSNAHHEMKNPEASKLN. 3 disulfide bridges follow: Cys-53–Cys-68, Cys-60–Cys-72, and Cys-67–Cys-77. Methionine sulfoxide; partial is present on Met-59.

Belongs to the conotoxin O1 superfamily. Expressed by the venom duct.

The protein localises to the secreted. Functionally, delta-conotoxins bind to site 6 of voltage-gated sodium channels (Nav) and inhibit the inactivation process. Binding of this toxin is strongly calcium-dependent but not voltage-dependent. The binding site is most likely on the extracellular side of the sodium channel. Binds receptor sites on both mollusk and rat central nervous system, but despite its high affinity binding to rat sodium channel, it has no functional effect in vivo and in vitro on it. Also has no effect on Gambusia fish. Is important in mollusk for the paralysis of the prey. Upon injection of the peptide, a subordinate lobster assumes an exaggerated dominant posture (of a 'King-Kong' lobster!). This Conus textile (Cloth-of-gold cone) protein is Delta-conotoxin TxVIA.